Consider the following 2131-residue polypeptide: Beta/gamma crystallin domain-containing protein 1 (2131 aa).

5 disordered regions span residues 1–53, 104–370, 385–674, 688–707, and 723–743; these read MPLS…LPAP, KSRA…KGHA, TEGA…PVHK, RTNS…TPAS, and AKEM…NGVL. The segment covering 19 to 35 has biased composition (basic residues); that stretch reads PPKKHTTFHLWRSKKKQ. Over residues 135-147 the composition is skewed to polar residues; the sequence is RNGLESPTRSNAK. 2 stretches are compositionally biased toward basic and acidic residues: residues 160–169 and 184–194; these read LPERESERSR and GSPRENPREAE. The span at 248–265 shows a compositional bias: polar residues; that stretch reads ATTTAKQLHSSPGNSSRQ. The segment covering 414 to 424 has biased composition (basic residues); sequence SGRRSGRRRGS. Residues 479-490 show a composition bias toward low complexity; it reads ASAASPESKPSP. Phosphoserine is present on residues serine 483 and serine 489. Basic and acidic residues-rich tracts occupy residues 536 to 546 and 562 to 572; these read PAKESPPKRVP and EAARAIPRELP. The segment covering 609–619 has biased composition (low complexity); sequence RAAGAPGASDA. Basic and acidic residues predominate over residues 723-733; sequence AKEMEQPEKKV. A phosphoserine mark is found at serine 737 and serine 756. 2 disordered regions span residues 758–791 and 837–889; these read EEIL…DVQT and DIPT…KDTC. Residues 769–782 show a composition bias toward polar residues; the sequence is GDSSENQALGPQPN. Positions 864 to 881 are enriched in low complexity; sequence SPAESSPGPSLSLSAPAP. Serine 892 carries the post-translational modification Phosphoserine. Disordered stretches follow at residues 926-947, 1041-1101, 1271-1302, and 1316-1348; these read LELG…AVGS, QAQS…VFDS, STSQ…EQSN, and SSST…SRSN. The residue at position 933 (threonine 933) is a Phosphothreonine. Polar residues predominate over residues 1055–1089; sequence SSPTNSPSSGNHLATPQRPDQTVTNGQDSPASLLN. Low complexity-rich tracts occupy residues 1091–1101, 1271–1288, and 1316–1327; these read SAGSDDSVFDS, STSQ…QPTT, and SSSTSHSSLKSP. The segment covering 1328-1348 has biased composition (basic and acidic residues); the sequence is SHMEKYPQKEKTKEDLDSRSN. Beta/gamma crystallin 'Greek key' domains are found at residues 1430 to 1469, 1470 to 1525, 1531 to 1571, 1572 to 1614, 1626 to 1678, 1679 to 1721, 1727 to 1769, 1770 to 1812, 1823 to 1860, 1861 to 1904, 1910 to 1950, and 1951 to 1992; these read GKVV…KVVR, GCWI…RHVV, SHID…KVHW, GTWL…RPLK, PKVV…KVLR, GIWV…RPIL, AHMI…NVLS, GVWV…QPIC, NQIH…RVSG, GSWV…RFID, PTII…QVIG, and GIWV…RPFV. The Ricin B-type lectin domain maps to 1994-2127; that stretch reads KRIYFRLRNK…EKFTQVWEAM (134 aa).

The protein belongs to the beta/gamma-crystallin family.

Functionally, may function as suppressor of malignant melanoma. It may exert its effects through interactions with the cytoskeleton. The polypeptide is Beta/gamma crystallin domain-containing protein 1 (Homo sapiens (Human)).